A 447-amino-acid chain; its full sequence is UPF0597 protein Amet_4665 (447 aa).

This sequence belongs to the UPF0597 family.

The polypeptide is UPF0597 protein Amet_4665 (Alkaliphilus metalliredigens (strain QYMF)).